We begin with the raw amino-acid sequence, 756 residues long: Phosphoinositide 3-kinase regulatory subunit 6 (756 aa).

Disordered regions lie at residues 570–589 (SKSP…EGTG) and 716–738 (CSRT…EKNM). Over residues 717–731 (SRTQKSKTSALNSHG) the composition is skewed to polar residues.

In terms of assembly, heterodimer of a catalytic subunit (PIK3CG) and a regulatory (PIK3R6) subunit. The binding of PIK3R6 to PIK3CG may exclude the binding of PIK3R5 to PIK3CG. Interacts with beta-gamma G protein dimers. Interacts with PDE3B and RAPGEF3; form a signaling complex that regulates phosphatidylinositol 3-kinase gamma in angiogenesis. In terms of tissue distribution, highly expressed in heart. In a lower extent, also expressed in brain, spleen, lung, liver, kidney, prostate, thyroid, salivary gland, dendritic cells, macrophages and neutrophils.

Its subcellular location is the cytoplasm. It localises to the cell membrane. Its function is as follows. Regulatory subunit of the PI3K gamma complex. Acts as an adapter to drive activation of PIK3CG by beta-gamma G protein dimers. The PIK3CG:PIK3R6 heterodimer is much less sensitive to beta-gamma G proteins than PIK3CG:PIK3R5 and its membrane recruitment and beta-gamma G protein dimer-dependent activation requires HRAS bound to PIK3CG. Recruits of the PI3K gamma complex to a PDE3B:RAPGEF3 signaling complex involved in angiogenesis; signaling seems to involve RRAS. The protein is Phosphoinositide 3-kinase regulatory subunit 6 (Pik3r6) of Mus musculus (Mouse).